Consider the following 284-residue polypeptide: Esterase alnB (284 aa).

Active-site charge relay system residues include serine 93, aspartate 226, and histidine 255.

This sequence belongs to the LovG family.

It functions in the pathway polyketide biosynthesis. Functionally, esterase; part of the gene cluster that mediates the biosynthesis of asperlin, a polyketide showing anti-inflammatory, antitumor and antibiotic activities. The first step of the asperlin biosynthesis is the production of the intermediate 2,4,6-octatrienoic acid by the highly redusing polyketide synthase alnA with cleavage of the PKS product by the esterase alnB. 2,4,6-octatrienoic acid is further converted to asperlin via several steps involving the remaining enzymes from the cluster. The sequence is that of Esterase alnB from Emericella nidulans (strain FGSC A4 / ATCC 38163 / CBS 112.46 / NRRL 194 / M139) (Aspergillus nidulans).